Here is a 298-residue protein sequence, read N- to C-terminus: DNA-binding transcriptional activator HetR (298 aa).

Ser-152 is a catalytic residue.

It belongs to the peptidase S48 family. In terms of assembly, homodimer; disulfide-linked.

Controls heterocyst differentiation. Dimerization is required for DNA-binding. Has both a protease and a DNA-binding activity. The polypeptide is DNA-binding transcriptional activator HetR (Nostoc sp. (strain PCC 9229)).